The following is a 196-amino-acid chain: Probable malonic semialdehyde reductase RutE (196 aa).

It belongs to the nitroreductase family. HadB/RutE subfamily. It depends on FMN as a cofactor.

It catalyses the reaction 3-hydroxypropanoate + NADP(+) = 3-oxopropanoate + NADPH + H(+). In terms of biological role, may reduce toxic product malonic semialdehyde to 3-hydroxypropionic acid, which is excreted. This Cronobacter sakazakii (strain ATCC BAA-894) (Enterobacter sakazakii) protein is Probable malonic semialdehyde reductase RutE.